The following is a 119-amino-acid chain: Protein BEX4 (119 aa).

The disordered stretch occupies residues 1–53; it reads MESKEELAANNLNGENAQQENEGREQAPTQNEETRHLGGGEGQKPGGNIRRGR. Residues 8-20 are compositionally biased toward low complexity; that stretch reads AANNLNGENAQQE. The segment at 31–89 is interaction with SIRT2; that stretch reads NEETRHLGGGEGQKPGGNIRRGRVRRLVPNFRWAIPNRHIEHNEARDDVERFVGQMMEI. An interaction with alpha-tubulin region spans residues 31 to 119; the sequence is NEETRHLGGG…DNHYDFCLIP (89 aa). Cys116 contributes to the Zn(2+) binding site.

The protein belongs to the BEX family. In terms of assembly, interacts with alpha-tubulin. Interacts with SIRT2. In terms of processing, ubiquitinated and degraded by the proteasome.

Its subcellular location is the cytoplasm. The protein localises to the cytoskeleton. It is found in the spindle pole. It localises to the nucleus. Its function is as follows. May play a role in microtubule deacetylation by negatively regulating the SIRT2 deacetylase activity toward alpha-tubulin and thereby participate in the control of cell cycle progression and genomic stability. In absence of reductive stress, acts as a pseudosubstrate for the CRL2(FEM1B) complex: associates with FEM1B via zinc, thereby preventing association between FEM1B and its substrates. In Pongo abelii (Sumatran orangutan), this protein is Protein BEX4.